The sequence spans 452 residues: Bifunctional protein GlmU (452 aa).

Residues 1-224 (MNIVILAAGQ…EWEVLGVNSK (224 aa)) are pyrophosphorylase. Residues 6–9 (LAAG), lysine 20, glutamine 71, 76–77 (GT), 98–100 (YGD), glycine 134, glutamate 149, asparagine 164, and asparagine 222 each bind UDP-N-acetyl-alpha-D-glucosamine. Aspartate 100 is a binding site for Mg(2+). Residue asparagine 222 participates in Mg(2+) binding. The segment at 225 to 245 (VQLAELERQHQLNLAGELLVA) is linker. The interval 246-452 (GVRLADPARI…GWERPKKVKK (207 aa)) is N-acetyltransferase. UDP-N-acetyl-alpha-D-glucosamine is bound by residues arginine 328 and lysine 346. Histidine 358 acts as the Proton acceptor in catalysis. 2 residues coordinate UDP-N-acetyl-alpha-D-glucosamine: tyrosine 361 and asparagine 372. Residues alanine 375, 381-382 (NY), serine 400, alanine 418, and arginine 435 contribute to the acetyl-CoA site.

The protein in the N-terminal section; belongs to the N-acetylglucosamine-1-phosphate uridyltransferase family. It in the C-terminal section; belongs to the transferase hexapeptide repeat family. In terms of assembly, homotrimer. Mg(2+) is required as a cofactor.

It localises to the cytoplasm. The catalysed reaction is alpha-D-glucosamine 1-phosphate + acetyl-CoA = N-acetyl-alpha-D-glucosamine 1-phosphate + CoA + H(+). The enzyme catalyses N-acetyl-alpha-D-glucosamine 1-phosphate + UTP + H(+) = UDP-N-acetyl-alpha-D-glucosamine + diphosphate. Its pathway is nucleotide-sugar biosynthesis; UDP-N-acetyl-alpha-D-glucosamine biosynthesis; N-acetyl-alpha-D-glucosamine 1-phosphate from alpha-D-glucosamine 6-phosphate (route II): step 2/2. It participates in nucleotide-sugar biosynthesis; UDP-N-acetyl-alpha-D-glucosamine biosynthesis; UDP-N-acetyl-alpha-D-glucosamine from N-acetyl-alpha-D-glucosamine 1-phosphate: step 1/1. It functions in the pathway bacterial outer membrane biogenesis; LPS lipid A biosynthesis. Catalyzes the last two sequential reactions in the de novo biosynthetic pathway for UDP-N-acetylglucosamine (UDP-GlcNAc). The C-terminal domain catalyzes the transfer of acetyl group from acetyl coenzyme A to glucosamine-1-phosphate (GlcN-1-P) to produce N-acetylglucosamine-1-phosphate (GlcNAc-1-P), which is converted into UDP-GlcNAc by the transfer of uridine 5-monophosphate (from uridine 5-triphosphate), a reaction catalyzed by the N-terminal domain. The chain is Bifunctional protein GlmU from Dechloromonas aromatica (strain RCB).